The chain runs to 211 residues: Transcriptional regulator GfcR (211 aa).

This sequence belongs to the purine/pyrimidine phosphoribosyltransferase family. GfcR subfamily.

In terms of biological role, DNA-binding transcriptional regulator that functions as a regulator of central sugar catabolic pathways. In Halorubrum lacusprofundi (strain ATCC 49239 / DSM 5036 / JCM 8891 / ACAM 34), this protein is Transcriptional regulator GfcR.